The chain runs to 160 residues: Putative pre-16S rRNA nuclease (160 aa).

Belongs to the YqgF nuclease family.

Its subcellular location is the cytoplasm. Its function is as follows. Could be a nuclease involved in processing of the 5'-end of pre-16S rRNA. This chain is Putative pre-16S rRNA nuclease, found in Cereibacter sphaeroides (strain ATCC 17025 / ATH 2.4.3) (Rhodobacter sphaeroides).